The following is a 236-amino-acid chain: Small ribosomal subunit protein uS2c (236 aa).

The protein belongs to the universal ribosomal protein uS2 family.

Its subcellular location is the plastid. The protein resides in the chloroplast. The protein is Small ribosomal subunit protein uS2c (rps2) of Carica papaya (Papaya).